The following is a 460-amino-acid chain: MPTTPLRKTAMTTRQPIYKSLYFQVIVAIVIGILIGHFYPETGKALKPLGDGFIKLIKMVIAPIIFCTVVSGIAGMQNMKSVGKTGGYALLYFEIVSTIALLIGLIVVNVVQPGAGMNIDVSTLDASKIAAYVTAGKDQSIVGFILNVIPNTIVGAFANGDILQVLMFSVIFGFALHRLGSYGKPVLDFIDRFAHVMFNIINMIMKLAPIGAFGAMAFTIGAYGVSSLVQLGQLMICFYITCVLFVVLVLGSICRAHGFSIFKLVRYIREELLIVLGTSSSESALPRMLIKMERLGAQKSVVGLVIPTGYSFNLDGTSIYLTMAAVFIAQATNTHMDITHQITLLLVLLLSSKGAAGVTGSGFIVLAATLSAVGHLPVAGLALILGIDRFMSEARALTNLVGNAVATVVVAKWVGELDTDKLQSELASGGSAILETRPEDDLGVAEGPTPANAVNTTKTV.

A run of 8 helical transmembrane segments spans residues 21 to 38, 53 to 75, 88 to 110, 153 to 175, 196 to 218, 231 to 253, 301 to 323, and 363 to 385; these read LYFQ…IGHF, FIKL…GIAG, YALL…VVNV, IVGA…FGFA, VMFN…AMAF, LGQL…LGSI, VVGL…YLTM, and FIVL…ALIL. The tract at residues 438 to 460 is disordered; the sequence is PEDDLGVAEGPTPANAVNTTKTV.

Belongs to the dicarboxylate/amino acid:cation symporter (DAACS) (TC 2.A.23) family.

The protein localises to the cell inner membrane. Responsible for the transport of dicarboxylates such as succinate, fumarate, and malate from the periplasm across the membrane. This chain is C4-dicarboxylate transport protein, found in Pseudomonas syringae pv. tomato (strain ATCC BAA-871 / DC3000).